Reading from the N-terminus, the 173-residue chain is MIDDPLVKSLLTNVVEDESNLPIVQALIDGVETDEAIAEKTEIKLNIVRKILYKLYDMGLATYKRSKDPETQWFTYSWKFEEQEVINHIKSDSEEYLKMLNKELEKEEDTMYFVCPQGHIRLDFETATEYDFICPECGEELEFFDNTNLIKQIKDDIKTVESNYKSFTKKVDA.

Residues 3–86 form the HTH TFE/IIEalpha-type domain; sequence DDPLVKSLLT…SWKFEEQEVI (84 aa).

The protein belongs to the TFE family. As to quaternary structure, monomer. Interaction with RNA polymerase subunits RpoF and RpoE is necessary for Tfe stimulatory transcription activity. Able to interact with Tbp and RNA polymerase in the absence of DNA promoter. Interacts both with the preinitiation and elongation complexes.

Transcription factor that plays a role in the activation of archaeal genes transcribed by RNA polymerase. Facilitates transcription initiation by enhancing TATA-box recognition by TATA-box-binding protein (Tbp), and transcription factor B (Tfb) and RNA polymerase recruitment. Not absolutely required for transcription in vitro, but particularly important in cases where Tbp or Tfb function is not optimal. It dynamically alters the nucleic acid-binding properties of RNA polymerases by stabilizing the initiation complex and destabilizing elongation complexes. Seems to translocate with the RNA polymerase following initiation and acts by binding to the non template strand of the transcription bubble in elongation complexes. The chain is Transcription factor E from Methanobrevibacter smithii (strain ATCC 35061 / DSM 861 / OCM 144 / PS).